Here is a 640-residue protein sequence, read N- to C-terminus: 1-deoxy-D-xylulose-5-phosphate synthase (640 aa).

Thiamine diphosphate is bound by residues H72 and 113–115 (GHA). D144 is a Mg(2+) binding site. Thiamine diphosphate-binding positions include 145 to 146 (GA), N174, Y287, and E370. N174 contributes to the Mg(2+) binding site.

Belongs to the transketolase family. DXPS subfamily. Homodimer. Mg(2+) serves as cofactor. It depends on thiamine diphosphate as a cofactor.

It catalyses the reaction D-glyceraldehyde 3-phosphate + pyruvate + H(+) = 1-deoxy-D-xylulose 5-phosphate + CO2. The protein operates within metabolic intermediate biosynthesis; 1-deoxy-D-xylulose 5-phosphate biosynthesis; 1-deoxy-D-xylulose 5-phosphate from D-glyceraldehyde 3-phosphate and pyruvate: step 1/1. Functionally, catalyzes the acyloin condensation reaction between C atoms 2 and 3 of pyruvate and glyceraldehyde 3-phosphate to yield 1-deoxy-D-xylulose-5-phosphate (DXP). This Synechocystis sp. (strain ATCC 27184 / PCC 6803 / Kazusa) protein is 1-deoxy-D-xylulose-5-phosphate synthase.